The following is a 482-amino-acid chain: Cardiolipin synthase (482 aa).

Transmembrane regions (helical) follow at residues leucine 4–phenylalanine 24 and tryptophan 34–phenylalanine 54. PLD phosphodiesterase domains follow at residues leucine 217 to tyrosine 244 and aspartate 395 to serine 422. Catalysis depends on residues histidine 222, lysine 224, aspartate 229, histidine 400, lysine 402, and aspartate 407.

It belongs to the phospholipase D family. Cardiolipin synthase subfamily.

The protein localises to the cell membrane. It carries out the reaction 2 a 1,2-diacyl-sn-glycero-3-phospho-(1'-sn-glycerol) = a cardiolipin + glycerol. Catalyzes the reversible phosphatidyl group transfer from one phosphatidylglycerol molecule to another to form cardiolipin (CL) (diphosphatidylglycerol) and glycerol. The protein is Cardiolipin synthase (cls) of Listeria welshimeri serovar 6b (strain ATCC 35897 / DSM 20650 / CCUG 15529 / CIP 8149 / NCTC 11857 / SLCC 5334 / V8).